Reading from the N-terminus, the 68-residue chain is Protein SlyX homolog (68 aa).

This sequence belongs to the SlyX family.

The sequence is that of Protein SlyX homolog from Brucella anthropi (strain ATCC 49188 / DSM 6882 / CCUG 24695 / JCM 21032 / LMG 3331 / NBRC 15819 / NCTC 12168 / Alc 37) (Ochrobactrum anthropi).